The following is a 130-amino-acid chain: Large ribosomal subunit protein bL21 (130 aa).

Residues 110 to 130 (TAPTATEETADATPDTETAAE) form a disordered region.

This sequence belongs to the bacterial ribosomal protein bL21 family. Part of the 50S ribosomal subunit. Contacts protein L20.

This protein binds to 23S rRNA in the presence of protein L20. This is Large ribosomal subunit protein bL21 from Nostoc sp. (strain PCC 7120 / SAG 25.82 / UTEX 2576).